A 413-amino-acid polypeptide reads, in one-letter code: Multifunctional CCA protein (413 aa).

Positions 8 and 11 each coordinate ATP. 2 residues coordinate CTP: Gly-8 and Arg-11. Asp-21 and Asp-23 together coordinate Mg(2+). 3 residues coordinate ATP: Arg-91, Arg-137, and Arg-140. CTP-binding residues include Arg-91, Arg-137, and Arg-140. In terms of domain architecture, HD spans 225–326; the sequence is TGVHVMMVID…ANLLQGVDAY (102 aa).

Belongs to the tRNA nucleotidyltransferase/poly(A) polymerase family. Bacterial CCA-adding enzyme type 1 subfamily. In terms of assembly, monomer. Can also form homodimers and oligomers. Requires Mg(2+) as cofactor. Ni(2+) is required as a cofactor.

The catalysed reaction is a tRNA precursor + 2 CTP + ATP = a tRNA with a 3' CCA end + 3 diphosphate. It carries out the reaction a tRNA with a 3' CCA end + 2 CTP + ATP = a tRNA with a 3' CCACCA end + 3 diphosphate. In terms of biological role, catalyzes the addition and repair of the essential 3'-terminal CCA sequence in tRNAs without using a nucleic acid template. Adds these three nucleotides in the order of C, C, and A to the tRNA nucleotide-73, using CTP and ATP as substrates and producing inorganic pyrophosphate. tRNA 3'-terminal CCA addition is required both for tRNA processing and repair. Also involved in tRNA surveillance by mediating tandem CCA addition to generate a CCACCA at the 3' terminus of unstable tRNAs. While stable tRNAs receive only 3'-terminal CCA, unstable tRNAs are marked with CCACCA and rapidly degraded. The sequence is that of Multifunctional CCA protein from Nitrosospira multiformis (strain ATCC 25196 / NCIMB 11849 / C 71).